Consider the following 293-residue polypeptide: Phosphate import ATP-binding protein PstB (293 aa).

An ABC transporter domain is found at 46–288 (FGIRGVDVFY…PDHELTEAYI (243 aa)). Residue 78 to 85 (GPSGCGKS) coordinates ATP.

The protein belongs to the ABC transporter superfamily. Phosphate importer (TC 3.A.1.7) family. The complex is composed of two ATP-binding proteins (PstB), two transmembrane proteins (PstC and PstA) and a solute-binding protein (PstS).

The protein resides in the cell inner membrane. It carries out the reaction phosphate(out) + ATP + H2O = ADP + 2 phosphate(in) + H(+). Its function is as follows. Part of the ABC transporter complex PstSACB involved in phosphate import. Responsible for energy coupling to the transport system. The protein is Phosphate import ATP-binding protein PstB of Saccharophagus degradans (strain 2-40 / ATCC 43961 / DSM 17024).